The primary structure comprises 321 residues: D-alanine--D-alanine ligase (321 aa).

Residues 121–315 (RSWFLTNNIN…FTNLIEEIIK (195 aa)) form the ATP-grasp domain. 147–199 (PMKRPYVIKPLTQGSSIGVEVIFAEDNFNFADYDFPYGDQVIIEQYIKGRELQ) lines the ATP pocket. Mg(2+) contacts are provided by glutamate 268, glutamate 282, and asparagine 284.

This sequence belongs to the D-alanine--D-alanine ligase family. It depends on Mg(2+) as a cofactor. The cofactor is Mn(2+).

The protein localises to the cytoplasm. The enzyme catalyses 2 D-alanine + ATP = D-alanyl-D-alanine + ADP + phosphate + H(+). It functions in the pathway cell wall biogenesis; peptidoglycan biosynthesis. Its function is as follows. Cell wall formation. This Rickettsia massiliae (strain Mtu5) protein is D-alanine--D-alanine ligase.